The sequence spans 415 residues: Gamma-glutamyl phosphate reductase (415 aa).

The protein belongs to the gamma-glutamyl phosphate reductase family.

The protein resides in the cytoplasm. The enzyme catalyses L-glutamate 5-semialdehyde + phosphate + NADP(+) = L-glutamyl 5-phosphate + NADPH + H(+). It participates in amino-acid biosynthesis; L-proline biosynthesis; L-glutamate 5-semialdehyde from L-glutamate: step 2/2. Catalyzes the NADPH-dependent reduction of L-glutamate 5-phosphate into L-glutamate 5-semialdehyde and phosphate. The product spontaneously undergoes cyclization to form 1-pyrroline-5-carboxylate. The sequence is that of Gamma-glutamyl phosphate reductase from Mycobacterium sp. (strain JLS).